A 228-amino-acid chain; its full sequence is Type II methyltransferase M.HhaII (228 aa).

It belongs to the N(4)/N(6)-methyltransferase family.

The catalysed reaction is a 2'-deoxyadenosine in DNA + S-adenosyl-L-methionine = an N(6)-methyl-2'-deoxyadenosine in DNA + S-adenosyl-L-homocysteine + H(+). A beta subtype methylase, recognizes the double-stranded sequence 5'-GANTC-3', methylates A-2 on both strands, and protects the DNA from cleavage by the HhaII endonuclease. The polypeptide is Type II methyltransferase M.HhaII (Haemophilus parahaemolyticus).